The following is a 163-amino-acid chain: C-type lectin lectoxin-Lio2 (163 aa).

A signal peptide spans 1–21 (MERFIFAALLVVALSLSGTGA). 3 disulfide bridges follow: C25-C36, C53-C152, and C127-C144. Positions 32–153 (SDGYCYKVFK…CRSKRYFICK (122 aa)) constitute a C-type lectin domain. Positions 117–119 (EPN) match the Mannose-binding motif. 2 residues coordinate Ca(2+): E125 and D141.

The protein belongs to the true venom lectin family. As to expression, expressed by the venom gland.

It is found in the secreted. Mannose-binding lectin which recognizes specific carbohydrate structures and agglutinates a variety of animal cells by binding to cell-surface glycoproteins and glycolipids. May be a calcium-dependent lectin. The protein is C-type lectin lectoxin-Lio2 of Erythrolamprus poecilogyrus (Water snake).